Reading from the N-terminus, the 336-residue chain is Dihydroorotate dehydrogenase (quinone) (336 aa).

Residues 62–66 and threonine 86 contribute to the FMN site; that span reads AGLDK. Lysine 66 is a binding site for substrate. 111-115 contributes to the substrate binding site; that stretch reads NRMGF. Asparagine 139 and asparagine 172 together coordinate FMN. Asparagine 172 is a substrate binding site. Serine 175 serves as the catalytic Nucleophile. Residue asparagine 177 participates in substrate binding. FMN is bound by residues lysine 217 and threonine 245. Residue 246 to 247 coordinates substrate; that stretch reads NT. FMN is bound by residues glycine 268, glycine 297, and 318–319; that span reads YS.

The protein belongs to the dihydroorotate dehydrogenase family. Type 2 subfamily. Monomer. FMN serves as cofactor.

It localises to the cell membrane. The catalysed reaction is (S)-dihydroorotate + a quinone = orotate + a quinol. The protein operates within pyrimidine metabolism; UMP biosynthesis via de novo pathway; orotate from (S)-dihydroorotate (quinone route): step 1/1. In terms of biological role, catalyzes the conversion of dihydroorotate to orotate with quinone as electron acceptor. The polypeptide is Dihydroorotate dehydrogenase (quinone) (Salmonella choleraesuis (strain SC-B67)).